A 513-amino-acid polypeptide reads, in one-letter code: Na(+)/H(+) antiporter NhaB (513 aa).

9 consecutive transmembrane segments (helical) span residues Ile21–Val41, Ile88–Met108, Leu119–Phe139, Leu243–Phe263, Met299–Ala318, Ile322–Gly344, Pro350–Leu370, Leu389–Gly409, and Met477–Leu497.

Belongs to the NhaB Na(+)/H(+) (TC 2.A.34) antiporter family.

It localises to the cell inner membrane. It catalyses the reaction 2 Na(+)(in) + 3 H(+)(out) = 2 Na(+)(out) + 3 H(+)(in). In terms of biological role, na(+)/H(+) antiporter that extrudes sodium in exchange for external protons. The polypeptide is Na(+)/H(+) antiporter NhaB (Actinobacillus pleuropneumoniae serotype 5b (strain L20)).